A 129-amino-acid polypeptide reads, in one-letter code: Phosphoribosyl-AMP cyclohydrolase (129 aa).

Residue Asp85 participates in Mg(2+) binding. A Zn(2+)-binding site is contributed by Cys86. Residues Asp87 and Asp89 each contribute to the Mg(2+) site. Zn(2+)-binding residues include Cys102 and Cys109.

It belongs to the PRA-CH family. In terms of assembly, homodimer. The cofactor is Mg(2+). Zn(2+) serves as cofactor.

The protein localises to the cytoplasm. The enzyme catalyses 1-(5-phospho-beta-D-ribosyl)-5'-AMP + H2O = 1-(5-phospho-beta-D-ribosyl)-5-[(5-phospho-beta-D-ribosylamino)methylideneamino]imidazole-4-carboxamide. Its pathway is amino-acid biosynthesis; L-histidine biosynthesis; L-histidine from 5-phospho-alpha-D-ribose 1-diphosphate: step 3/9. Its function is as follows. Catalyzes the hydrolysis of the adenine ring of phosphoribosyl-AMP. This is Phosphoribosyl-AMP cyclohydrolase from Methanococcus maripaludis (strain C7 / ATCC BAA-1331).